We begin with the raw amino-acid sequence, 284 residues long: Bifunctional protein FolD (284 aa).

NADP(+) contacts are provided by residues 166-168 (GAS), Ser191, and Ile232.

Belongs to the tetrahydrofolate dehydrogenase/cyclohydrolase family. As to quaternary structure, homodimer.

The catalysed reaction is (6R)-5,10-methylene-5,6,7,8-tetrahydrofolate + NADP(+) = (6R)-5,10-methenyltetrahydrofolate + NADPH. The enzyme catalyses (6R)-5,10-methenyltetrahydrofolate + H2O = (6R)-10-formyltetrahydrofolate + H(+). It functions in the pathway one-carbon metabolism; tetrahydrofolate interconversion. Its function is as follows. Catalyzes the oxidation of 5,10-methylenetetrahydrofolate to 5,10-methenyltetrahydrofolate and then the hydrolysis of 5,10-methenyltetrahydrofolate to 10-formyltetrahydrofolate. This Neisseria meningitidis serogroup A / serotype 4A (strain DSM 15465 / Z2491) protein is Bifunctional protein FolD.